A 301-amino-acid chain; its full sequence is Bifunctional protein FolD (301 aa).

Residues 164–166 (GRS), Ser-191, and Ile-232 contribute to the NADP(+) site.

The protein belongs to the tetrahydrofolate dehydrogenase/cyclohydrolase family. As to quaternary structure, homodimer.

It catalyses the reaction (6R)-5,10-methylene-5,6,7,8-tetrahydrofolate + NADP(+) = (6R)-5,10-methenyltetrahydrofolate + NADPH. It carries out the reaction (6R)-5,10-methenyltetrahydrofolate + H2O = (6R)-10-formyltetrahydrofolate + H(+). The protein operates within one-carbon metabolism; tetrahydrofolate interconversion. In terms of biological role, catalyzes the oxidation of 5,10-methylenetetrahydrofolate to 5,10-methenyltetrahydrofolate and then the hydrolysis of 5,10-methenyltetrahydrofolate to 10-formyltetrahydrofolate. This chain is Bifunctional protein FolD, found in Borreliella afzelii (strain PKo) (Borrelia afzelii).